Reading from the N-terminus, the 403-residue chain is Acetate kinase (403 aa).

Mg(2+) is bound at residue N8. K15 is an ATP binding site. Residue R90 participates in substrate binding. The active-site Proton donor/acceptor is the D147. ATP-binding positions include 207–211 (HLGSG), 282–284 (DLR), and 330–334 (GVGEN). Residue E384 participates in Mg(2+) binding.

Belongs to the acetokinase family. Homodimer. The cofactor is Mg(2+). It depends on Mn(2+) as a cofactor.

It is found in the cytoplasm. It carries out the reaction acetate + ATP = acetyl phosphate + ADP. Its pathway is metabolic intermediate biosynthesis; acetyl-CoA biosynthesis; acetyl-CoA from acetate: step 1/2. In terms of biological role, catalyzes the formation of acetyl phosphate from acetate and ATP. Can also catalyze the reverse reaction. This Exiguobacterium sibiricum (strain DSM 17290 / CCUG 55495 / CIP 109462 / JCM 13490 / 255-15) protein is Acetate kinase.